Here is a 608-residue protein sequence, read N- to C-terminus: MEAPAVCLLPLLLLLWAWAPAPGRASPEALPLVNEDVKRTVDLSSHLAKVTAEVVLAHAGSSSSPRAASFLLALEPELEARLAHLGVQVKGEDEEENNLEVRETKIKGKRGRFFTVTLPVALDPGAKISVTVETVYTHVLQPYPTQITQSEKQFVVFEGNHYFYSPYPTKSQSMRVKLASRNVESYTKLGNPTRSEDLLDYGPFRDVPPYSQDTFKVHSENNSPFLTITSMTRVIEVSHWGNIAVEENVDLKHTGAVLKGPFSRYDYQRQPDSGISSIRSFKTILPAAAQDVYYRDEIGNVSTSHLLILDDSVEMEIRPRFPLFGGWKTHYIVGYNLPSYEYLYNLGDQYALKMRLVDHVFDEQVIDSLTVKIILPEGAKNIQVDSPYEISRAPDELHYTYLDTFGRPVIVAHKKNLVEQHIQDIVVHYTFNKVLMLQEPLLVVAAFYILFFTVIVYVRLDFSITKDPAAEARMKVACITEQVLTLVNKRIGLYRHFDETINRYKQSRDVSTLNSGKKSLELEHKALTSEVALLQSRLKTEGSDLCDKVSEMQKLDAQVKELVLKSAVEAERLVAGKLKKDTYIENEKLISGKRQELVTKIDHILDAL.

An N-terminal signal peptide occupies residues 1–24; the sequence is MEAPAVCLLPLLLLLWAWAPAPGR. At 25 to 435 the chain is on the lumenal side; the sequence is ASPEALPLVN…VVHYTFNKVL (411 aa). Lysine 188 carries the post-translational modification N6-acetyllysine. Asparagine 300 is a glycosylation site (N-linked (GlcNAc...) asparagine). A helical membrane pass occupies residues 436–456; the sequence is MLQEPLLVVAAFYILFFTVIV. Topologically, residues 457 to 607 are cytoplasmic; that stretch reads YVRLDFSITK…VTKIDHILDA (151 aa). Lysine 539 is subject to N6-acetyllysine; alternate. Residue lysine 539 forms a Glycyl lysine isopeptide (Lys-Gly) (interchain with G-Cter in SUMO2); alternate linkage.

Belongs to the OST1 family. Component of the oligosaccharyltransferase (OST) complex. OST exists in two different complex forms which contain common core subunits RPN1, RPN2, OST48, OST4, DAD1 and TMEM258, either STT3A or STT3B as catalytic subunits, and form-specific accessory subunits. STT3A complex assembly occurs through the formation of 3 subcomplexes. Subcomplex 1 contains RPN1 and TMEM258, subcomplex 2 contains the STT3A-specific subunits STT3A, DC2/OSTC, and KCP2 as well as the core subunit OST4, and subcomplex 3 contains RPN2, DAD1, and OST48. The STT3A complex can form stable complexes with the Sec61 complex or with both the Sec61 and TRAP complexes. Interacts with TMEM35A/NACHO. Post-translationally, ubiquitinated by the ECS(ASB11) complex. Ufmylated by UFL1 in response to endoplasmic reticulum stress, promoting reticulophagy of endoplasmic reticulum sheets. In terms of tissue distribution, detected in liver (at protein level).

It is found in the endoplasmic reticulum membrane. It participates in protein modification; protein glycosylation. Subunit of the oligosaccharyl transferase (OST) complex that catalyzes the initial transfer of a defined glycan (Glc(3)Man(9)GlcNAc(2) in eukaryotes) from the lipid carrier dolichol-pyrophosphate to an asparagine residue within an Asn-X-Ser/Thr consensus motif in nascent polypeptide chains, the first step in protein N-glycosylation. N-glycosylation occurs cotranslationally and the complex associates with the Sec61 complex at the channel-forming translocon complex that mediates protein translocation across the endoplasmic reticulum (ER). All subunits are required for a maximal enzyme activity. The protein is Dolichyl-diphosphooligosaccharide--protein glycosyltransferase subunit 1 of Sus scrofa (Pig).